A 433-amino-acid chain; its full sequence is Alpha-(1,3)-fucosyltransferase fut-1 (433 aa).

Residues 1 to 12 (MTARSIKLFFAR) are Cytoplasmic-facing. The helical; Signal-anchor for type II membrane protein transmembrane segment at 13 to 32 (WKYLMFACCITYLLVIYAPI) threads the bilayer. The Lumenal portion of the chain corresponds to 33-433 (SKSEQKDWKE…GTLVDSIPLD (401 aa)). N-linked (GlcNAc...) asparagine glycans are attached at residues Asn194 and Asn359.

The protein belongs to the glycosyltransferase 10 family. The cofactor is Mg(2+). It depends on Mn(2+) as a cofactor. Post-translationally, N-glycosylated. Glycosylation is important for enzymatic activity. In terms of tissue distribution, expressed in the pharyngeal-intestinal (PI) and anal valves. Expressed in ASG neurons and in one or two neurons in the retrovesicular ganglion and two neurons posterior to the PI valve and PHA and PHB neurons in the tail.

The protein localises to the golgi apparatus. It localises to the golgi stack membrane. The enzyme catalyses N(4)-{beta-D-GlcNAc-(1-&gt;2)-alpha-D-Man-(1-&gt;3)-[beta-D-GlcNAc-(1-&gt;2)-alpha-D-Man-(1-&gt;6)]-beta-D-Man-(1-&gt;4)-beta-D-GlcNAc-(1-&gt;4)-beta-D-GlcNAc}-L-asparaginyl-[protein] + GDP-beta-L-fucose = N(4)-{beta-D-GlcNAc-(1-&gt;2)-alpha-D-Man-(1-&gt;3)-[beta-D-GlcNAc-(1-&gt;2)-alpha-D-Man-(1-&gt;6)]-beta-D-Man-(1-&gt;4)-beta-D-GlcNAc-(1-&gt;4)-[alpha-L-Fuc(1-&gt;3)]-beta-D-GlcNAc}-L-asparaginyl-[protein] + GDP + H(+). It functions in the pathway protein modification; protein glycosylation. With respect to regulation, inhibited by Cu(2+) or Zn(2+) and to a lesser extent Ni(2+) ions. Its function is as follows. Preferentially catalyzes the addition of fucose in alpha 1-3 linkage to the first GlcNAc residue (with or without alpha 1,6-linked fucose), next to the peptide chains in N-glycans. Unlike in mammals, does not require the prior action of N-acetylglucosaminyltransferase I to generate complex N-glycans. This is Alpha-(1,3)-fucosyltransferase fut-1 from Caenorhabditis elegans.